Reading from the N-terminus, the 328-residue chain is Fe(3+) ions import ATP-binding protein FbpC 1 (328 aa).

The ABC transporter domain maps to 7–237; sequence LVLKNITKAF…PNSLFLANFM (231 aa). 39–46 serves as a coordination point for ATP; it reads GPSGCGKT.

It belongs to the ABC transporter superfamily. Fe(3+) ion importer (TC 3.A.1.10) family. As to quaternary structure, the complex is composed of two ATP-binding proteins (FbpC), two transmembrane proteins (FbpB) and a solute-binding protein (FbpA).

The protein resides in the cell inner membrane. The enzyme catalyses Fe(3+)(out) + ATP + H2O = Fe(3+)(in) + ADP + phosphate + H(+). Functionally, part of the ABC transporter complex FbpABC involved in Fe(3+) ions import. Responsible for energy coupling to the transport system. The protein is Fe(3+) ions import ATP-binding protein FbpC 1 of Haemophilus influenzae (strain ATCC 51907 / DSM 11121 / KW20 / Rd).